A 287-amino-acid polypeptide reads, in one-letter code: Pantothenate synthetase (287 aa).

ATP is bound at residue 30–37; that stretch reads MGNLHSGH. His-37 (proton donor) is an active-site residue. Gln-61 is a (R)-pantoate binding site. Gln-61 contacts beta-alanine. 149-152 serves as a coordination point for ATP; it reads GEKD. Gln-155 contributes to the (R)-pantoate binding site. ATP-binding positions include Val-178 and 186-189; that span reads LSSR.

Belongs to the pantothenate synthetase family. In terms of assembly, homodimer.

It is found in the cytoplasm. It carries out the reaction (R)-pantoate + beta-alanine + ATP = (R)-pantothenate + AMP + diphosphate + H(+). It participates in cofactor biosynthesis; (R)-pantothenate biosynthesis; (R)-pantothenate from (R)-pantoate and beta-alanine: step 1/1. Catalyzes the condensation of pantoate with beta-alanine in an ATP-dependent reaction via a pantoyl-adenylate intermediate. In Pseudomonas putida (strain GB-1), this protein is Pantothenate synthetase.